A 258-amino-acid chain; its full sequence is Casein kinase II subunit beta' (258 aa).

Positions 1–10 (MGSRSENVGT) are enriched in polar residues. The disordered stretch occupies residues 1–29 (MGSRSENVGTVTREGSRVEQDDVLMDDDS).

This sequence belongs to the casein kinase 2 subunit beta family. As to quaternary structure, tetramer composed of an alpha subunit, an alpha' subunit, one beta subunit and one beta' subunit. Interacts with FACT subunits POB3 and SPT16. Interaction with YTA7. Post-translationally, phosphorylated by alpha subunit. In terms of processing, the N-terminus is blocked.

In terms of biological role, regulatory subunit of casein kinase II/CK2. As part of the kinase complex regulates the basal catalytic activity of the alpha subunit a constitutively active serine/threonine-protein kinase that phosphorylates a large number of substrates containing acidic residues C-terminal to the phosphorylated serine or threonine. The sequence is that of Casein kinase II subunit beta' from Saccharomyces cerevisiae (strain ATCC 204508 / S288c) (Baker's yeast).